Reading from the N-terminus, the 101-residue chain is NADH-quinone oxidoreductase subunit K (101 aa).

3 consecutive transmembrane segments (helical) span residues 4–24, 29–49, and 61–81; these read LAHY…GIFL, IIII…NFVA, and IFVF…LAIL.

This sequence belongs to the complex I subunit 4L family. In terms of assembly, NDH-1 is composed of 14 different subunits. Subunits NuoA, H, J, K, L, M, N constitute the membrane sector of the complex.

The protein resides in the cell inner membrane. It carries out the reaction a quinone + NADH + 5 H(+)(in) = a quinol + NAD(+) + 4 H(+)(out). Functionally, NDH-1 shuttles electrons from NADH, via FMN and iron-sulfur (Fe-S) centers, to quinones in the respiratory chain. The immediate electron acceptor for the enzyme in this species is believed to be ubiquinone. Couples the redox reaction to proton translocation (for every two electrons transferred, four hydrogen ions are translocated across the cytoplasmic membrane), and thus conserves the redox energy in a proton gradient. This chain is NADH-quinone oxidoreductase subunit K, found in Burkholderia ambifaria (strain MC40-6).